A 533-amino-acid polypeptide reads, in one-letter code: Metal transporter nramp1 homolog (533 aa).

The interval 1 to 33 is disordered; the sequence is MTPRIESEESAPLVNKNNNNNNDNNNNNNVDEE. Topologically, residues 1 to 68 are cytoplasmic; it reads MTPRIESEES…PNIDKPDSKW (68 aa). Over residues 14-29 the composition is skewed to low complexity; sequence VNKNNNNNNDNNNNNN. The helical transmembrane segment at 69 to 89 threads the bilayer; sequence INFKTLWAFTGPGFLMSIAYL. Residues 90 to 101 are Extracellular-facing; that stretch reads DPGNLESDIQAG. Residues 102–122 traverse the membrane as a helical segment; sequence AMAGYQLLWVLFWSTVIGFWL. The Cytoplasmic segment spans residues 123–158; it reads QMLASRLGVVTGKHLAEHCREQYPKTPRLLLWLMTE. The chain crosses the membrane as a helical span at residues 159–179; that stretch reads LAIIGSDIQEVIGTAIALQIL. The Extracellular portion of the chain corresponds to 180-182; it reads SNG. A helical membrane pass occupies residues 183-203; it reads HIPLWAGVLFTAADTFTFLFL. At 204 to 212 the chain is on the cytoplasmic side; the sequence is EKYGIRKLE. The chain crosses the membrane as a helical span at residues 213–233; sequence AFFCSLIAIMAISFGVEYIIS. The Extracellular portion of the chain corresponds to 234–256; it reads KPDQIEVVKGVFIPLCSQNNISQ. Asn253 is a glycosylation site (N-linked (GlcNAc...) asparagine). A helical membrane pass occupies residues 257 to 277; the sequence is AVGILGAVVMPHNIYLHSALV. Residues 278-302 lie on the Cytoplasmic side of the membrane; that stretch reads QSREIDRKSETQVKIANKYNRLESA. Residues 303–323 form a helical membrane-spanning segment; the sequence is FALIISFIINLLLVSVFAKGF. The Extracellular portion of the chain corresponds to 324-348; sequence YGETTEIGLSSAADFLMDKYGKVAK. The chain crosses the membrane as a helical span at residues 349 to 368; sequence YIWAIGLFSAGQCSTMTGTY. Topologically, residues 369 to 387 are cytoplasmic; it reads SGQFVMEGFLKLKIAPWKR. A helical membrane pass occupies residues 388–408; the sequence is LLITRCTAIVPAMVVAILSTS. Residues 409–415 are Extracellular-facing; that stretch reads HLDSLDQ. Residues 416–436 form a helical membrane-spanning segment; that stretch reads WLNILQSIQLPFAVVPVLLFT. The Cytoplasmic portion of the chain corresponds to 437–457; that stretch reads SSEKIMGSKFKNHWLNNQFVR. Residues 458 to 478 form a helical membrane-spanning segment; sequence FLSLLIIAINIYLIITFSMQI. The Extracellular segment spans residues 479-481; the sequence is SES. The chain crosses the membrane as a helical span at residues 482–502; sequence AWMISIVSISFFFYFIFIVYL. The Cytoplasmic segment spans residues 503–533; the sequence is SMGQENFNSMTKKIKNLFNNNSNQTYNNINY.

Belongs to the NRAMP family.

Its subcellular location is the membrane. Functionally, depletes iron from the phagolysosome in an ATP-dependent process. May rather act as a symporter of protons and metal cations in an ATP-dependent process. Nramp1 overexpression protected cells from L.pneumophila infection. This Dictyostelium discoideum (Social amoeba) protein is Metal transporter nramp1 homolog (nramp1).